Here is a 165-residue protein sequence, read N- to C-terminus: Regulatory protein RecX (165 aa).

It belongs to the RecX family.

It localises to the cytoplasm. Modulates RecA activity. This Cronobacter sakazakii (strain ATCC BAA-894) (Enterobacter sakazakii) protein is Regulatory protein RecX.